The following is an 835-amino-acid chain: Replication origin-binding protein (835 aa).

Positions Pro-54–His-215 constitute a Helicase ATP-binding domain. Ala-67–Thr-74 is a binding site for ATP.

Belongs to the herpesviridae OriBP family. As to quaternary structure, homodimer. Interacts with the major DNA-binding protein. Interacts with the helicase/primase component 52 and the polymerase accessory protein.

The protein resides in the host nucleus. In terms of biological role, functions as a docking protein to recruit essential components of the viral replication machinery to viral DNA origins. In the presence of the major DNA-binding protein, opens dsDNA leading to a conformational change in the origin that facilitates DNA unwinding and subsequent replication. In Homo sapiens (Human), this protein is Replication origin-binding protein.